The primary structure comprises 949 residues: Insulin receptor substrate 1 (949 aa).

Positions 8–109 (GMALSGYLKK…WLDKLLVLQR (102 aa)) constitute a PH domain. An IRS-type PTB domain is found at 122–236 (YDQVWQVVIQ…SAMSAKTESN (115 aa)). The disordered stretch occupies residues 247 to 270 (PDLSHEPMRKRSSSANEASKPINV). 3 positions are modified to phosphoserine: Ser-286, Ser-287, and Ser-342. Polar residues predominate over residues 304 to 345 (RNGTLSESSNQTYFGSNHGLRSNTISGNRPHSTNKHSNSPTF). A disordered region spans residues 304–373 (RNGTLSESSN…SDDNGSYSHY (70 aa)). Tyr-410 is modified (phosphotyrosine; by INSR). The short motif at 410 to 413 (YIPM) is the YXXM motif 1 element. The interval 530 to 556 (RSQSSITKEGSGYGTSGNRQKKSTSAP) is disordered. Ser-554 is subject to Phosphoserine. The short motif at 640–643 (YLEM) is the YXXM motif 2 element. Residues 696 to 706 (REQTTSEEKKS) are compositionally biased toward basic and acidic residues. Positions 696–718 (REQTTSEEKKSNSPLNEKPFSLK) are disordered. Phosphotyrosine; by INSR is present on Tyr-892. Positions 906–949 (AKYLKRGSRESPPVSACPEDGNTYAKIDFDQSDSSSSSSNIFNT) are disordered. 2 positions are modified to phosphoserine: Ser-913 and Ser-916. Tyr-929 carries the phosphotyrosine; by INSR modification. Low complexity predominate over residues 937–949 (SDSSSSSSNIFNT).

In terms of assembly, bindings to phosphatidylinositol 3-kinase and SHP2.

Activates phosphatidylinositol 3-kinase when bound to the regulatory p85 subunit. May mediate the control of various cellular processes by insulin-like peptides. When phosphorylated by the insulin receptor binds specifically to various cellular proteins containing SH2 domains. Involved in control of cell proliferation, cell size, and body and organ growth throughout development. Also has a role in a signaling pathway controlling the physiological response required to endure periods of low nutrient conditions. Insulin/insulin-like growth factor (IGF) signaling pathway has a role in regulating aging and is necessary in the ovary for vitellogenic maturation. This chain is Insulin receptor substrate 1, found in Drosophila yakuba (Fruit fly).